We begin with the raw amino-acid sequence, 131 residues long: Large ribosomal subunit protein bL17 (131 aa).

The protein belongs to the bacterial ribosomal protein bL17 family. Part of the 50S ribosomal subunit. Contacts protein L32.

The chain is Large ribosomal subunit protein bL17 from Cupriavidus necator (strain ATCC 17699 / DSM 428 / KCTC 22496 / NCIMB 10442 / H16 / Stanier 337) (Ralstonia eutropha).